The primary structure comprises 243 residues: Pyridoxine 5'-phosphate synthase (243 aa).

Asparagine 9 is a 3-amino-2-oxopropyl phosphate binding site. 11–12 (DH) lines the 1-deoxy-D-xylulose 5-phosphate pocket. Position 20 (arginine 20) interacts with 3-amino-2-oxopropyl phosphate. The active-site Proton acceptor is the histidine 45. 1-deoxy-D-xylulose 5-phosphate is bound by residues arginine 47 and histidine 52. Glutamate 72 (proton acceptor) is an active-site residue. Threonine 102 contacts 1-deoxy-D-xylulose 5-phosphate. Histidine 193 serves as the catalytic Proton donor. Residues glycine 194 and 215 to 216 (GH) contribute to the 3-amino-2-oxopropyl phosphate site.

This sequence belongs to the PNP synthase family. In terms of assembly, homooctamer; tetramer of dimers.

The protein localises to the cytoplasm. The enzyme catalyses 3-amino-2-oxopropyl phosphate + 1-deoxy-D-xylulose 5-phosphate = pyridoxine 5'-phosphate + phosphate + 2 H2O + H(+). The protein operates within cofactor biosynthesis; pyridoxine 5'-phosphate biosynthesis; pyridoxine 5'-phosphate from D-erythrose 4-phosphate: step 5/5. Functionally, catalyzes the complicated ring closure reaction between the two acyclic compounds 1-deoxy-D-xylulose-5-phosphate (DXP) and 3-amino-2-oxopropyl phosphate (1-amino-acetone-3-phosphate or AAP) to form pyridoxine 5'-phosphate (PNP) and inorganic phosphate. This chain is Pyridoxine 5'-phosphate synthase, found in Salmonella typhimurium (strain LT2 / SGSC1412 / ATCC 700720).